Reading from the N-terminus, the 425-residue chain is Serine--tRNA ligase (425 aa).

228–230 (TAE) contributes to the L-serine binding site. Residue 259-261 (RSE) coordinates ATP. An L-serine-binding site is contributed by glutamate 282. 346–349 (EIAS) contacts ATP. Serine 382 serves as a coordination point for L-serine.

This sequence belongs to the class-II aminoacyl-tRNA synthetase family. Type-1 seryl-tRNA synthetase subfamily. Homodimer. The tRNA molecule binds across the dimer.

It localises to the cytoplasm. It catalyses the reaction tRNA(Ser) + L-serine + ATP = L-seryl-tRNA(Ser) + AMP + diphosphate + H(+). The catalysed reaction is tRNA(Sec) + L-serine + ATP = L-seryl-tRNA(Sec) + AMP + diphosphate + H(+). It participates in aminoacyl-tRNA biosynthesis; selenocysteinyl-tRNA(Sec) biosynthesis; L-seryl-tRNA(Sec) from L-serine and tRNA(Sec): step 1/1. Functionally, catalyzes the attachment of serine to tRNA(Ser). Is also able to aminoacylate tRNA(Sec) with serine, to form the misacylated tRNA L-seryl-tRNA(Sec), which will be further converted into selenocysteinyl-tRNA(Sec). The polypeptide is Serine--tRNA ligase (Rickettsia felis (strain ATCC VR-1525 / URRWXCal2) (Rickettsia azadi)).